Here is a 155-residue protein sequence, read N- to C-terminus: Pathogenesis-related protein STH-21 (155 aa).

This sequence belongs to the BetVI family.

In Solanum tuberosum (Potato), this protein is Pathogenesis-related protein STH-21 (STH-21).